Here is a 92-residue protein sequence, read N- to C-terminus: Small ribosomal subunit protein bS20 (92 aa).

The interval 1–24 (MANTTSAKKATRKIARRTDVNKAR) is disordered.

Belongs to the bacterial ribosomal protein bS20 family.

Functionally, binds directly to 16S ribosomal RNA. This is Small ribosomal subunit protein bS20 from Rhizobium etli (strain ATCC 51251 / DSM 11541 / JCM 21823 / NBRC 15573 / CFN 42).